A 266-amino-acid polypeptide reads, in one-letter code: GTP cyclohydrolase FolE2 (266 aa).

It belongs to the GTP cyclohydrolase IV family.

It carries out the reaction GTP + H2O = 7,8-dihydroneopterin 3'-triphosphate + formate + H(+). The protein operates within cofactor biosynthesis; 7,8-dihydroneopterin triphosphate biosynthesis; 7,8-dihydroneopterin triphosphate from GTP: step 1/1. In terms of biological role, converts GTP to 7,8-dihydroneopterin triphosphate. This Methylobacillus flagellatus (strain ATCC 51484 / DSM 6875 / VKM B-1610 / KT) protein is GTP cyclohydrolase FolE2.